Reading from the N-terminus, the 205-residue chain is GTP cyclohydrolase-2 (205 aa).

R49–E53 is a GTP binding site. Zn(2+) is bound by residues C54, C65, and C67. GTP contacts are provided by residues Q70, E92–R94, and T114. Catalysis depends on D126, which acts as the Proton acceptor. The active-site Nucleophile is the R128. Residues T149 and K154 each coordinate GTP.

It belongs to the GTP cyclohydrolase II family. Requires Zn(2+) as cofactor.

The catalysed reaction is GTP + 4 H2O = 2,5-diamino-6-hydroxy-4-(5-phosphoribosylamino)-pyrimidine + formate + 2 phosphate + 3 H(+). It functions in the pathway cofactor biosynthesis; riboflavin biosynthesis; 5-amino-6-(D-ribitylamino)uracil from GTP: step 1/4. Its function is as follows. Catalyzes the conversion of GTP to 2,5-diamino-6-ribosylamino-4(3H)-pyrimidinone 5'-phosphate (DARP), formate and pyrophosphate. The sequence is that of GTP cyclohydrolase-2 from Pseudomonas aeruginosa (strain UCBPP-PA14).